The primary structure comprises 338 residues: GTPase Obg (338 aa).

The region spanning 1–159 (MSFIDEVKIN…RWIRMELKLM (159 aa)) is the Obg domain. The disordered stretch occupies residues 58–79 (DLRQHPHQKAGRGKNGMGSDRH). Residues 160 to 331 (ADVGLLGMPS…LLDDIAFNLW (172 aa)) enclose the OBG-type G domain. GTP-binding positions include 166–173 (GMPSVGKS), 191–195 (FTTLK), 213–216 (DIPG), 283–286 (NKID), and 312–314 (SAA). 2 residues coordinate Mg(2+): serine 173 and threonine 193.

The protein belongs to the TRAFAC class OBG-HflX-like GTPase superfamily. OBG GTPase family. In terms of assembly, monomer. Mg(2+) serves as cofactor.

The protein localises to the cytoplasm. Functionally, an essential GTPase which binds GTP, GDP and possibly (p)ppGpp with moderate affinity, with high nucleotide exchange rates and a fairly low GTP hydrolysis rate. Plays a role in control of the cell cycle, stress response, ribosome biogenesis and in those bacteria that undergo differentiation, in morphogenesis control. This chain is GTPase Obg, found in Citrifermentans bemidjiense (strain ATCC BAA-1014 / DSM 16622 / JCM 12645 / Bem) (Geobacter bemidjiensis).